A 321-amino-acid polypeptide reads, in one-letter code: Urease accessory protein UreD (321 aa).

Belongs to the UreD family. In terms of assembly, ureD, UreF and UreG form a complex that acts as a GTP-hydrolysis-dependent molecular chaperone, activating the urease apoprotein by helping to assemble the nickel containing metallocenter of UreC. The UreE protein probably delivers the nickel.

It localises to the cytoplasm. Required for maturation of urease via the functional incorporation of the urease nickel metallocenter. The protein is Urease accessory protein UreD of Yersinia pseudotuberculosis serotype O:1b (strain IP 31758).